The chain runs to 150 residues: Aspartate 1-decarboxylase (150 aa).

Ser24 acts as the Schiff-base intermediate with substrate; via pyruvic acid in catalysis. Ser24 is subject to Pyruvic acid (Ser). Thr56 lines the substrate pocket. Tyr57 serves as the catalytic Proton donor. Substrate is bound at residue 72–74; it reads GAA.

Belongs to the PanD family. Heterooctamer of four alpha and four beta subunits. Pyruvate serves as cofactor. Is synthesized initially as an inactive proenzyme, which is activated by self-cleavage at a specific serine bond to produce a beta-subunit with a hydroxyl group at its C-terminus and an alpha-subunit with a pyruvoyl group at its N-terminus.

It is found in the cytoplasm. The enzyme catalyses L-aspartate + H(+) = beta-alanine + CO2. It functions in the pathway cofactor biosynthesis; (R)-pantothenate biosynthesis; beta-alanine from L-aspartate: step 1/1. Its function is as follows. Catalyzes the pyruvoyl-dependent decarboxylation of aspartate to produce beta-alanine. The polypeptide is Aspartate 1-decarboxylase (Beijerinckia indica subsp. indica (strain ATCC 9039 / DSM 1715 / NCIMB 8712)).